Reading from the N-terminus, the 406-residue chain is Tryptophan synthase beta chain (406 aa).

Lysine 99 bears the N6-(pyridoxal phosphate)lysine mark.

It belongs to the TrpB family. Tetramer of two alpha and two beta chains. Requires pyridoxal 5'-phosphate as cofactor.

It catalyses the reaction (1S,2R)-1-C-(indol-3-yl)glycerol 3-phosphate + L-serine = D-glyceraldehyde 3-phosphate + L-tryptophan + H2O. It functions in the pathway amino-acid biosynthesis; L-tryptophan biosynthesis; L-tryptophan from chorismate: step 5/5. Its function is as follows. The beta subunit is responsible for the synthesis of L-tryptophan from indole and L-serine. The chain is Tryptophan synthase beta chain from Rhizobium leguminosarum bv. trifolii (strain WSM2304).